A 138-amino-acid chain; its full sequence is Large ribosomal subunit protein uL16 (138 aa).

Residues methionine 1–glycine 19 show a composition bias toward basic residues. A disordered region spans residues methionine 1–lysine 22.

Belongs to the universal ribosomal protein uL16 family. Part of the 50S ribosomal subunit.

Its function is as follows. Binds 23S rRNA and is also seen to make contacts with the A and possibly P site tRNAs. This Parafrankia sp. (strain EAN1pec) protein is Large ribosomal subunit protein uL16.